We begin with the raw amino-acid sequence, 417 residues long: Serine hydroxymethyltransferase (417 aa).

(6S)-5,6,7,8-tetrahydrofolate-binding positions include Leu-121 and 125 to 127 (GHL). N6-(pyridoxal phosphate)lysine is present on Lys-229. Residue 355–357 (SPF) coordinates (6S)-5,6,7,8-tetrahydrofolate.

The protein belongs to the SHMT family. In terms of assembly, homodimer. Pyridoxal 5'-phosphate is required as a cofactor.

It is found in the cytoplasm. The enzyme catalyses (6R)-5,10-methylene-5,6,7,8-tetrahydrofolate + glycine + H2O = (6S)-5,6,7,8-tetrahydrofolate + L-serine. It functions in the pathway one-carbon metabolism; tetrahydrofolate interconversion. The protein operates within amino-acid biosynthesis; glycine biosynthesis; glycine from L-serine: step 1/1. Its function is as follows. Catalyzes the reversible interconversion of serine and glycine with tetrahydrofolate (THF) serving as the one-carbon carrier. This reaction serves as the major source of one-carbon groups required for the biosynthesis of purines, thymidylate, methionine, and other important biomolecules. Also exhibits THF-independent aldolase activity toward beta-hydroxyamino acids, producing glycine and aldehydes, via a retro-aldol mechanism. In Shewanella sp. (strain MR-4), this protein is Serine hydroxymethyltransferase.